The sequence spans 323 residues: Serine/threonine-protein phosphatase PP1-gamma catalytic subunit B (323 aa).

D64, H66, D92, and N124 together coordinate Mn(2+). H125 acts as the Proton donor in catalysis. The Mn(2+) site is built by H173 and H248. Positions K301–K323 are disordered.

It belongs to the PPP phosphatase family. PP-1 subfamily. As to quaternary structure, PP1 comprises a catalytic subunit, ppp1c1, ppp1cb or ppp1cc, which is folded into its native form by inhibitor 2 and glycogen synthetase kinase 3, and then is complexed to one or several targeting or regulatory subunits. The cofactor is Mn(2+).

It is found in the cytoplasm. Its subcellular location is the nucleus. It localises to the cleavage furrow. The protein resides in the nucleolus. The protein localises to the nucleoplasm. It is found in the chromosome. Its subcellular location is the centromere. It localises to the kinetochore. The protein resides in the nucleus speckle. The protein localises to the midbody. It is found in the mitochondrion. It carries out the reaction O-phospho-L-seryl-[protein] + H2O = L-seryl-[protein] + phosphate. It catalyses the reaction O-phospho-L-threonyl-[protein] + H2O = L-threonyl-[protein] + phosphate. In terms of biological role, protein phosphatase that associates with over 200 regulatory proteins to form highly specific holoenzymes which dephosphorylate hundreds of biological targets. Protein phosphatase 1 (PP1) is essential for cell division, and participates in the regulation of glycogen metabolism, muscle contractility and protein synthesis. Promotes nuclear envelope reassembly by targeting nuclear membrane vesicles to chromatin at the end of mitosis. Acts by dephosphorylating membrane proteins such as lamin B receptor (lbr) to regulate the binding of membrane proteins to chromatin. This is Serine/threonine-protein phosphatase PP1-gamma catalytic subunit B (ppp1cc-b) from Xenopus laevis (African clawed frog).